Reading from the N-terminus, the 211-residue chain is Protein-L-isoaspartate O-methyltransferase (211 aa).

Residue Ser60 is part of the active site.

This sequence belongs to the methyltransferase superfamily. L-isoaspartyl/D-aspartyl protein methyltransferase family.

Its subcellular location is the cytoplasm. The catalysed reaction is [protein]-L-isoaspartate + S-adenosyl-L-methionine = [protein]-L-isoaspartate alpha-methyl ester + S-adenosyl-L-homocysteine. Functionally, catalyzes the methyl esterification of L-isoaspartyl residues in peptides and proteins that result from spontaneous decomposition of normal L-aspartyl and L-asparaginyl residues. It plays a role in the repair and/or degradation of damaged proteins. The chain is Protein-L-isoaspartate O-methyltransferase from Pseudomonas paraeruginosa (strain DSM 24068 / PA7) (Pseudomonas aeruginosa (strain PA7)).